A 1604-amino-acid polypeptide reads, in one-letter code: Collagen alpha-1(XVI) chain (1604 aa).

The first 21 residues, 1-21 (MWVSWAPGLWLLGLWATFGHG), serve as a signal peptide directing secretion. A glycan (N-linked (GlcNAc...) asparagine) is linked at Asn47. A Laminin G-like domain is found at 50–231 (GFNLIHRLSL…LQQVHIYCDP (182 aa)). Residues 232–374 (ELVLEEGCCE…SPDAPLQCAE (143 aa)) are nonhelical region 10 (NC10). Basic and acidic residues predominate over residues 301-311 (AERGAKVHQET). The segment at 301 to 509 (AERGAKVHQE…KGEKGDPCEV (209 aa)) is disordered. Asn327 is a glycosylation site (N-linked (GlcNAc...) asparagine). The region spanning 375–423 (GPKGEKGESGALGPSGLPGSTGEKGQKGEKGDGGIKGVPGKPGRDGRPG) is the Collagen-like 1 domain. The tract at residues 375–506 (GPKGEKGESG…PGVKGEKGDP (132 aa)) is triple-helical region 9 (COL9) with 3 imperfections. Residues 383 to 397 (SGALGPSGLPGSTGE) show a composition bias toward low complexity. Residues 398–407 (KGQKGEKGDG) are compositionally biased toward basic and acidic residues. A compositionally biased stretch (pro residues) spans 449 to 460 (PGPPGLPGPPGI). A compositionally biased stretch (gly residues) spans 486–495 (GKEGPGGKPG). Residues 507-521 (CEVCPTLPEGFQNFV) form a nonhelical region 9 (NC9) region. The triple-helical region 8 (COL8) with 1 imperfection stretch occupies residues 522–555 (GLPGKPGPKGEPGDPVPARGDPGIQGIKGEKGEP). The Cell attachment site signature appears at 540-542 (RGD). The nonhelical region 8 (NC8) stretch occupies residues 556–572 (CLSCSSVVGAQHLVSST). Positions 573-631 (GASGDVGSPGFGLPGLPGRAGVPGLKGEKGNFGEAGPAGSPGPPGPVGPAGIKGAKGEP) are triple-helical region 7 (COL7) with 1 imperfection. Collagen-like domains are found at residues 573–633 (GASG…EPCE) and 667–721 (GLPG…GEKG). A disordered region spans residues 604–917 (FGEAGPAGSP…PPGIPGPPGP (314 aa)). Residues 632-652 (CEPCPALSNLQDGDVRVVALP) form a nonhelical region 7 (NC7) region. The tract at residues 653 to 723 (GPSGEKGEPG…AGPKGEKGDG (71 aa)) is triple-helical region 6 (COL6) with 1 imperfection. Residues 674–684 (KAGERGLKGQK) show a composition bias toward basic and acidic residues. The span at 686-702 (DAGNPGDPGTPGTTGRP) shows a compositional bias: low complexity. The segment at 724–738 (CTACPSLQGTVTDMA) is nonhelical region 6 (NC6). Residues 739-876 (GRPGQPGPKG…RGEKGEPGEC (138 aa)) are triple-helical region 5 (COL5) with 3 imperfections. Composition is skewed to low complexity over residues 766–781 (LPGV…VQGE), 792–808 (PQGE…QGLP), and 826–846 (PGVK…SGPP). The Collagen-like 4 domain maps to 788–840 (GVQGPQGEPGAPGLPGIQGLPGPRGPPGPTGEKGAQGSPGVKGATGPVGPPGA). Over residues 864 to 873 (KGPRGEKGEP) the composition is skewed to basic and acidic residues. The nonhelical region 5 (NC5) stretch occupies residues 877–887 (SCPSQGDLIFS). The Collagen-like 5 domain maps to 888–938 (GMPGAPGLWMGSSWQPGPQGPPGIPGPPGPPGVPGLQGVPGNNGLPGQPGL). Positions 888–939 (GMPGAPGLWMGSSWQPGPQGPPGIPGPPGPPGVPGLQGVPGNNGLPGQPGLT) are triple-helical region 4 (COL4) with 2 imperfections. The span at 905–917 (PQGPPGIPGPPGP) shows a compositional bias: pro residues. Positions 940-973 (AELGSLPIEQHLLKSICGDCVQGQRAHPGYLVEK) are nonhelical region 4 (NC4). The interval 974 to 988 (GEKGDQGIPGVPGLD) is triple-helical region 3 (COL3). Residues 989–1011 (NCAQCFLSLERPRAEEARGDNSE) form a nonhelical region 3 (NC3) region. Disordered stretches follow at residues 1001-1429 (RAEE…VPGS) and 1468-1517 (MAAA…PGTK). A Cell attachment site motif is present at residues 1006-1008 (RGD). The triple-helical region 2 (COL2) with 2 imperfections stretch occupies residues 1012–1433 (GDPGCVGSPG…PGVPGSMGDM (422 aa)). A Collagen-like 6 domain is found at 1018 to 1075 (GSPGLPGPPGLPGQRGEEGPPGMRGSPGPPGPIGPPGFPGAVGSPGLPGLQGERGLTG). 3 stretches are compositionally biased toward pro residues: residues 1044–1055 (PGPPGPIGPPGF), 1160–1169 (FPGPPGPPGF), and 1199–1208 (SPGPPGPPGI). Positions 1217–1226 (LDGKDGKPGL) are enriched in basic and acidic residues. The Cell attachment site motif lies at 1227 to 1229 (RGD). Positions 1271–1284 (RPGAEGEPGAMGPQ) are enriched in low complexity. 2 stretches are compositionally biased toward pro residues: residues 1286–1302 (RPGP…PGQP) and 1330–1342 (QPGP…PPGE). The segment covering 1369–1378 (DPGAAGQKGQ) has biased composition (low complexity). The segment covering 1386–1395 (GMPGGPGKSG) has biased composition (gly residues). Over residues 1420-1429 (SPGLPGVPGS) the composition is skewed to low complexity. The segment at 1434–1472 (VNYDEIKRFIRQEIIKMFDERMAYYTSRMQFPMEMAAAP) is nonhelical region 2 (NC2). Collagen-like domains are found at residues 1472-1524 (PGRP…GDIG) and 1528-1576 (AGEN…GKAG). A triple-helical region 1 (COL1) with 2 imperfections region spans residues 1473–1578 (GRPGPPGKDG…MGQPGKAGHC (106 aa)). The interval 1579 to 1604 (NPSDCFGAMPMEQQYPPMKTMKGPFG) is nonhelical region 1 (NC1).

This sequence belongs to the fibril-associated collagens with interrupted helices (FACIT) family. Homotrimer. Interacts with FBN1, fibronectin and integrins ITGA1/ITGB1 and ITGA2/ITGB1. Integrin ITGA1/ITGB1 binds to a unique site within COL16A1 located close to its C-terminal end between collagenous domains COL1-COL3. Prolines at the third position of the tripeptide repeating unit (G-X-Y) are hydroxylated in some or all of the chains. In terms of processing, glycosylated. As to expression, in papillary dermis, is a component of specialized fibrillin-1-containing microfibrils, whereas in territorial cartilage matrix, it is localized to a discrete population of thin, weakly banded collagen fibrils in association with other collagens (at protein level). In the placenta, where it is found in the amnion, a membranous tissue lining the amniotic cavity. Within the amnion, it is found in an acellular, relatively dense layer of a complex network of reticular fibers. Also located to a fibroblast layer beneath this dense layer. Exists in tissues in association with other types of collagen.

The protein localises to the secreted. Its subcellular location is the extracellular space. It is found in the extracellular matrix. Functionally, involved in mediating cell attachment and inducing integrin-mediated cellular reactions, such as cell spreading and alterations in cell morphology. This Homo sapiens (Human) protein is Collagen alpha-1(XVI) chain (COL16A1).